We begin with the raw amino-acid sequence, 432 residues long: Uracil permease (432 aa).

Helical transmembrane passes span 25–45 (LFAM…DPSI), 65–85 (VPAY…AKTA), 89–109 (GAAM…ALII), 124–144 (VVVG…AVGM), 155–175 (LLHF…SVLA), 181–201 (LIPV…VGLV), 206–226 (VAAA…DYPV), 228–248 (VTWE…SEHI), 305–325 (VYSV…GFVG), 330–350 (LISS…FGII), 370–390 (NLVI…LKIS), and 393–413 (FQIT…LILP).

The protein belongs to the nucleobase:cation symporter-2 (NCS2) (TC 2.A.40) family.

Its subcellular location is the cell membrane. Its function is as follows. Transport of uracil in the cell. In Bacillus caldolyticus, this protein is Uracil permease (pyrP).